The following is a 590-amino-acid chain: Probable metalloendopeptidase G1-type (590 aa).

His-41 is a Zn(2+) binding site. The active site involves Glu-44. Zn(2+) is bound at residue His-45.

It belongs to the peptidase M44 family. Requires Zn(2+) as cofactor.

Its function is as follows. Seems to be involved in viral proteins maturation by cleavage at Ala-Gly-|-Xaa motifs. This chain is Probable metalloendopeptidase G1-type, found in Oryctolagus cuniculus (Rabbit).